The primary structure comprises 928 residues: Probable outer membrane protein pmp10 (928 aa).

An N-terminal signal peptide occupies residues 1-25 (MKSQFSWLVLSSTLACFTSCSTVFA). In terms of domain architecture, Autotransporter spans 635 to 928 (TLCSDRGFWA…NVDLGGKFQF (294 aa)).

This sequence belongs to the PMP outer membrane protein family.

The protein resides in the secreted. Its subcellular location is the cell wall. It is found in the cell outer membrane. The polypeptide is Probable outer membrane protein pmp10 (pmp10) (Chlamydia pneumoniae (Chlamydophila pneumoniae)).